Reading from the N-terminus, the 438-residue chain is Proline--tRNA ligase (438 aa).

Belongs to the class-II aminoacyl-tRNA synthetase family. ProS type 2 subfamily. In terms of assembly, homodimer.

Its subcellular location is the cytoplasm. It catalyses the reaction tRNA(Pro) + L-proline + ATP = L-prolyl-tRNA(Pro) + AMP + diphosphate. In terms of biological role, catalyzes the attachment of proline to tRNA(Pro) in a two-step reaction: proline is first activated by ATP to form Pro-AMP and then transferred to the acceptor end of tRNA(Pro). In Rhodopseudomonas palustris (strain TIE-1), this protein is Proline--tRNA ligase.